Here is a 268-residue protein sequence, read N- to C-terminus: Phosphate import ATP-binding protein PstB 2 (268 aa).

The ABC transporter domain maps to 19–263 (YKVRNMAFFY…PKDKRTEDYI (245 aa)). Position 51–58 (51–58 (GPSGCGKS)) interacts with ATP.

It belongs to the ABC transporter superfamily. Phosphate importer (TC 3.A.1.7) family. In terms of assembly, the complex is composed of two ATP-binding proteins (PstB), two transmembrane proteins (PstC and PstA) and a solute-binding protein (PstS).

It localises to the cell inner membrane. The enzyme catalyses phosphate(out) + ATP + H2O = ADP + 2 phosphate(in) + H(+). Part of the ABC transporter complex PstSACB involved in phosphate import. Responsible for energy coupling to the transport system. This chain is Phosphate import ATP-binding protein PstB 2, found in Gloeobacter violaceus (strain ATCC 29082 / PCC 7421).